We begin with the raw amino-acid sequence, 293 residues long: 4-hydroxy-tetrahydrodipicolinate synthase (293 aa).

A pyruvate-binding site is contributed by T45. The Proton donor/acceptor role is filled by Y133. Catalysis depends on K161, which acts as the Schiff-base intermediate with substrate. Residue I203 participates in pyruvate binding.

It belongs to the DapA family. In terms of assembly, homotetramer; dimer of dimers.

The protein localises to the cytoplasm. It catalyses the reaction L-aspartate 4-semialdehyde + pyruvate = (2S,4S)-4-hydroxy-2,3,4,5-tetrahydrodipicolinate + H2O + H(+). It participates in amino-acid biosynthesis; L-lysine biosynthesis via DAP pathway; (S)-tetrahydrodipicolinate from L-aspartate: step 3/4. Catalyzes the condensation of (S)-aspartate-beta-semialdehyde [(S)-ASA] and pyruvate to 4-hydroxy-tetrahydrodipicolinate (HTPA). The sequence is that of 4-hydroxy-tetrahydrodipicolinate synthase from Pseudoalteromonas atlantica (strain T6c / ATCC BAA-1087).